Consider the following 149-residue polypeptide: Nucleoside diphosphate kinase (149 aa).

Residues Lys-9, Phe-57, Arg-85, Thr-91, Arg-102, and Asn-112 each coordinate ATP. The active-site Pros-phosphohistidine intermediate is the His-115.

It belongs to the NDK family. Homotetramer. The cofactor is Mg(2+).

It is found in the cytoplasm. The catalysed reaction is a 2'-deoxyribonucleoside 5'-diphosphate + ATP = a 2'-deoxyribonucleoside 5'-triphosphate + ADP. The enzyme catalyses a ribonucleoside 5'-diphosphate + ATP = a ribonucleoside 5'-triphosphate + ADP. In terms of biological role, major role in the synthesis of nucleoside triphosphates other than ATP. The ATP gamma phosphate is transferred to the NDP beta phosphate via a ping-pong mechanism, using a phosphorylated active-site intermediate. In Crocosphaera subtropica (strain ATCC 51142 / BH68) (Cyanothece sp. (strain ATCC 51142)), this protein is Nucleoside diphosphate kinase.